A 388-amino-acid chain; its full sequence is Succinate--CoA ligase [ADP-forming] subunit beta (388 aa).

The 236-residue stretch at 9–244 folds into the ATP-grasp domain; sequence KQLFAEFGLP…PSQEDEREAH (236 aa). Residues Lys46, 53 to 55, Glu99, Ser102, and Glu107 each bind ATP; that span reads GRG. The Mg(2+) site is built by Asn199 and Asp213. Substrate contacts are provided by residues Asn264 and 321–323; that span reads GIV.

This sequence belongs to the succinate/malate CoA ligase beta subunit family. As to quaternary structure, heterotetramer of two alpha and two beta subunits. It depends on Mg(2+) as a cofactor.

It catalyses the reaction succinate + ATP + CoA = succinyl-CoA + ADP + phosphate. The enzyme catalyses GTP + succinate + CoA = succinyl-CoA + GDP + phosphate. Its pathway is carbohydrate metabolism; tricarboxylic acid cycle; succinate from succinyl-CoA (ligase route): step 1/1. In terms of biological role, succinyl-CoA synthetase functions in the citric acid cycle (TCA), coupling the hydrolysis of succinyl-CoA to the synthesis of either ATP or GTP and thus represents the only step of substrate-level phosphorylation in the TCA. The beta subunit provides nucleotide specificity of the enzyme and binds the substrate succinate, while the binding sites for coenzyme A and phosphate are found in the alpha subunit. This Vibrio atlanticus (strain LGP32) (Vibrio splendidus (strain Mel32)) protein is Succinate--CoA ligase [ADP-forming] subunit beta.